The chain runs to 1307 residues: Rho1 guanine nucleotide exchange factor TUS1 (1307 aa).

Residues 1–10 (MYRYNRSSPF) show a composition bias toward polar residues. Disordered stretches follow at residues 1–144 (MYRY…FIGN), 164–194 (PFAN…SDLR), and 219–239 (EDSE…NVSG). Residues 12–29 (RTPEKRVSRQESQRKSIE) are compositionally biased toward basic and acidic residues. The segment covering 37–79 (NTRNSFLDDSDNGTDNISIGWTPISDTQQFQSPVPQAFTFTSK) has biased composition (polar residues). A compositionally biased stretch (low complexity) spans 87–97 (TSSSESTPKST). Positions 176–194 (SPRDSSKQQAHFSDESDLR) are enriched in basic and acidic residues. A DH domain is found at 467–657 (QRQSFIFDLI…EKLNFEVNQV (191 aa)). A PH domain is found at 715–877 (KLVLSGTVYK…WIDAIMESFK (163 aa)). A disordered region spans residues 780 to 802 (TSKQPLRNYSQKEHKSPMHNFST). The 342-residue stretch at 938 to 1279 (TTRILCCEDV…KLASSERREK (342 aa)) folds into the CNH domain.

Interacts with RHO1.

Its function is as follows. Guanine nucleotide-exchange factor (GEF) for RHO1 that stimulates the exchange of RHO1 GDP-bound form into GTP-bound form. Required for signaling of cell wall defects to RHO1. This Saccharomyces cerevisiae (strain ATCC 204508 / S288c) (Baker's yeast) protein is Rho1 guanine nucleotide exchange factor TUS1 (TUS1).